Here is a 1703-residue protein sequence, read N- to C-terminus: Protein TIC 214 (1703 aa).

A run of 6 helical transmembrane segments spans residues 39-61 (YYGF…TFFL), 67-87 (GIIC…SIYC), 90-110 (LYVM…YMFY), 138-158 (LLLD…NPVL), 174-194 (FFLT…INSI), and 220-240 (FSIL…VPLI). Disordered regions lie at residues 615–643 (GPRK…KERE) and 1431–1494 (TKEP…WKSK). The stretch at 618–660 (KGKLEDKEKEKEKAAQTQTEVKKEREKEKEERVIKRFQNQSDF) forms a coiled coil. Basic and acidic residues predominate over residues 619–643 (GKLEDKEKEKEKAAQTQTEVKKERE).

This sequence belongs to the TIC214 family. Part of the Tic complex.

The protein resides in the plastid. It localises to the chloroplast inner membrane. Involved in protein precursor import into chloroplasts. May be part of an intermediate translocation complex acting as a protein-conducting channel at the inner envelope. This is Protein TIC 214 from Psilotum nudum (Whisk fern).